We begin with the raw amino-acid sequence, 465 residues long: tRNA-2-methylthio-N(6)-dimethylallyladenosine synthase (465 aa).

The 116-residue stretch at 26–141 (MRAHIITYGC…LPEALKANER (116 aa)) folds into the MTTase N-terminal domain. Cys-35, Cys-71, Cys-104, Cys-173, Cys-177, and Cys-180 together coordinate [4Fe-4S] cluster. A Radical SAM core domain is found at 159-388 (PKGALSAHVT…IEKQKEWSYR (230 aa)). In terms of domain architecture, TRAM spans 391 to 453 (LEWVGKTVEV…PHLLFGEVVG (63 aa)).

It belongs to the methylthiotransferase family. MiaB subfamily. As to quaternary structure, monomer. The cofactor is [4Fe-4S] cluster.

It is found in the cytoplasm. It carries out the reaction N(6)-dimethylallyladenosine(37) in tRNA + (sulfur carrier)-SH + AH2 + 2 S-adenosyl-L-methionine = 2-methylsulfanyl-N(6)-dimethylallyladenosine(37) in tRNA + (sulfur carrier)-H + 5'-deoxyadenosine + L-methionine + A + S-adenosyl-L-homocysteine + 2 H(+). In terms of biological role, catalyzes the methylthiolation of N6-(dimethylallyl)adenosine (i(6)A), leading to the formation of 2-methylthio-N6-(dimethylallyl)adenosine (ms(2)i(6)A) at position 37 in tRNAs that read codons beginning with uridine. This is tRNA-2-methylthio-N(6)-dimethylallyladenosine synthase from Thermus thermophilus (strain ATCC 27634 / DSM 579 / HB8).